The primary structure comprises 202 residues: dITP/XTP pyrophosphatase (202 aa).

Residue 7-12 coordinates substrate; sequence SRNEAK. D68 serves as the catalytic Proton acceptor. D68 contributes to the Mg(2+) binding site. Residues S69, 156 to 159, K179, and 184 to 185 contribute to the substrate site; these read FGYD and HR.

Belongs to the HAM1 NTPase family. As to quaternary structure, homodimer. It depends on Mg(2+) as a cofactor.

The enzyme catalyses XTP + H2O = XMP + diphosphate + H(+). It carries out the reaction dITP + H2O = dIMP + diphosphate + H(+). The catalysed reaction is ITP + H2O = IMP + diphosphate + H(+). Its function is as follows. Pyrophosphatase that catalyzes the hydrolysis of nucleoside triphosphates to their monophosphate derivatives, with a high preference for the non-canonical purine nucleotides XTP (xanthosine triphosphate), dITP (deoxyinosine triphosphate) and ITP. Seems to function as a house-cleaning enzyme that removes non-canonical purine nucleotides from the nucleotide pool, thus preventing their incorporation into DNA/RNA and avoiding chromosomal lesions. This is dITP/XTP pyrophosphatase from Frankia alni (strain DSM 45986 / CECT 9034 / ACN14a).